The sequence spans 289 residues: MDPAERAQAARARVPRIDPYGFERPEDFDYAAYEEFFSTYLVILTKRAIKWSKLLKGSGGVRKSVTDLNRTFPDNVMFRKTADPCLQKTLYNVLLAYGLHNQDVGYCQGMNFIAGYLILITKNEEESFWLLDALVGRILPDYYSPAMLGLKTDQEVLAELVRMKLPAVAALMDGHGVLWTLLVSRWFICLFVDILPVETVLRIWDCLFNEGSKIIFRVALTLIKQHQEFILEASSVPDICDKFKQITKGDFVTECHTFMQKIFSEPGSLSMATITRLRESCRAALQAQS.

In terms of domain architecture, Rab-GAP TBC spans 41–211 (LVILTKRAIK…RIWDCLFNEG (171 aa)).

Its function is as follows. May act as a GTPase-activating protein for Rab family protein(s). This Rattus norvegicus (Rat) protein is Growth hormone-regulated TBC protein 1 (Grtp1).